The following is a 385-amino-acid chain: UPF0744 protein YSC83 (385 aa).

Belongs to the UPF0744 family.

The protein resides in the mitochondrion outer membrane. This chain is UPF0744 protein YSC83 (YSC83), found in Saccharomyces cerevisiae (strain ATCC 204508 / S288c) (Baker's yeast).